Reading from the N-terminus, the 365-residue chain is MSLGRVTVTAVRNLHPVTLNPSPRINILYGPNGSGKTSLLEAIHLLGLARSFRSQRLSPVIQHEQPACTVFGQVLWNDGRVRNLGVARNRLGELQIRIDGQNVRSAAQLAESLPLQLINPDSFRLLEGAPKVRRQFLDWGVFHVEQRFLPAWHRLQTALRQRNSWLRHGRIDPVSQAAWDRELCLASEEIDSYRRSYIQVLKPVFESVLHELVELDGLTLSYYRGWDRERSLGEVLAASLPRDQQLGHTQAGPQRADLRLRLAAHNAADLLSRGQQKLVVCALKIAQGHLVDRARRECIYLVDDLPSELDEQHRRALCRLLEELHCQVFITCVDLEALREGWRTDTPVALFHVEQGRITQTHDRE.

30–37 (GPNGSGKT) lines the ATP pocket.

This sequence belongs to the RecF family.

It is found in the cytoplasm. Its function is as follows. The RecF protein is involved in DNA metabolism; it is required for DNA replication and normal SOS inducibility. RecF binds preferentially to single-stranded, linear DNA. It also seems to bind ATP. The chain is DNA replication and repair protein RecF from Azotobacter vinelandii (strain DJ / ATCC BAA-1303).